We begin with the raw amino-acid sequence, 131 residues long: Large ribosomal subunit protein bL17 (131 aa).

It belongs to the bacterial ribosomal protein bL17 family. As to quaternary structure, part of the 50S ribosomal subunit. Contacts protein L32.

This Nitrosospira multiformis (strain ATCC 25196 / NCIMB 11849 / C 71) protein is Large ribosomal subunit protein bL17.